The following is a 255-amino-acid chain: 5'-nucleotidase SurE (255 aa).

Residues Asp-8, Asp-9, Ser-39, and Asn-95 each coordinate a divalent metal cation.

The protein belongs to the SurE nucleotidase family. A divalent metal cation serves as cofactor.

The protein localises to the cytoplasm. It catalyses the reaction a ribonucleoside 5'-phosphate + H2O = a ribonucleoside + phosphate. In terms of biological role, nucleotidase that shows phosphatase activity on nucleoside 5'-monophosphates. This Herpetosiphon aurantiacus (strain ATCC 23779 / DSM 785 / 114-95) protein is 5'-nucleotidase SurE.